We begin with the raw amino-acid sequence, 466 residues long: Glutamate decarboxylase beta (466 aa).

Residues T62 and N83 each contribute to the substrate site. Residues 126–127, T212, and H275 contribute to the pyridoxal 5'-phosphate site; that span reads SS. N6-(pyridoxal phosphate)lysine is present on K276. N6-acetyllysine is present on residues K446, K453, and K464.

It belongs to the group II decarboxylase family. In terms of assembly, homohexamer composed of three dimers. Pyridoxal 5'-phosphate is required as a cofactor.

It catalyses the reaction L-glutamate + H(+) = 4-aminobutanoate + CO2. Its function is as follows. Converts glutamate to gamma-aminobutyrate (GABA), consuming one intracellular proton in the reaction. The gad system helps to maintain a near-neutral intracellular pH when cells are exposed to extremely acidic conditions. The ability to survive transit through the acidic conditions of the stomach is essential for successful colonization of the mammalian host by commensal and pathogenic bacteria. This Escherichia coli O6:H1 (strain CFT073 / ATCC 700928 / UPEC) protein is Glutamate decarboxylase beta (gadB).